We begin with the raw amino-acid sequence, 274 residues long: 2-succinyl-6-hydroxy-2,4-cyclohexadiene-1-carboxylate synthase (274 aa).

This sequence belongs to the AB hydrolase superfamily. MenH family. As to quaternary structure, monomer.

It catalyses the reaction 5-enolpyruvoyl-6-hydroxy-2-succinyl-cyclohex-3-ene-1-carboxylate = (1R,6R)-6-hydroxy-2-succinyl-cyclohexa-2,4-diene-1-carboxylate + pyruvate. It functions in the pathway quinol/quinone metabolism; 1,4-dihydroxy-2-naphthoate biosynthesis; 1,4-dihydroxy-2-naphthoate from chorismate: step 3/7. It participates in quinol/quinone metabolism; menaquinone biosynthesis. Its function is as follows. Catalyzes a proton abstraction reaction that results in 2,5-elimination of pyruvate from 2-succinyl-5-enolpyruvyl-6-hydroxy-3-cyclohexene-1-carboxylate (SEPHCHC) and the formation of 2-succinyl-6-hydroxy-2,4-cyclohexadiene-1-carboxylate (SHCHC). This Yersinia enterocolitica serotype O:8 / biotype 1B (strain NCTC 13174 / 8081) protein is 2-succinyl-6-hydroxy-2,4-cyclohexadiene-1-carboxylate synthase.